Reading from the N-terminus, the 360-residue chain is uncharacterized protein (360 aa).

One can recognise an ABC transporter domain in the interval 4–235 (LSLQHIQKIY…PANMFVAGFI (232 aa)). 37–44 (GPSGCGKS) is an ATP binding site.

The protein belongs to the ABC transporter superfamily.

This is an uncharacterized protein from Escherichia coli O6:K15:H31 (strain 536 / UPEC).